The sequence spans 359 residues: Protein mab-21-like 2 (359 aa).

Belongs to the mab-21 family.

Its subcellular location is the nucleus. It localises to the cytoplasm. In terms of biological role, required for several aspects of embryonic development including normal development of the eye. The sequence is that of Protein mab-21-like 2 (mab21l2) from Xenopus tropicalis (Western clawed frog).